The following is a 354-amino-acid chain: Sulfate/thiosulfate import ATP-binding protein CysA 2 (354 aa).

Positions Ile-3–Leu-237 constitute an ABC transporter domain. Gly-35–Thr-42 is an ATP binding site.

It belongs to the ABC transporter superfamily. Sulfate/tungstate importer (TC 3.A.1.6) family. The complex is composed of two ATP-binding proteins (CysA), two transmembrane proteins (CysT and CysW) and a solute-binding protein (CysP).

Its subcellular location is the cell inner membrane. The catalysed reaction is sulfate(out) + ATP + H2O = sulfate(in) + ADP + phosphate + H(+). It carries out the reaction thiosulfate(out) + ATP + H2O = thiosulfate(in) + ADP + phosphate + H(+). Part of the ABC transporter complex CysAWTP involved in sulfate/thiosulfate import. Responsible for energy coupling to the transport system. In Shewanella oneidensis (strain ATCC 700550 / JCM 31522 / CIP 106686 / LMG 19005 / NCIMB 14063 / MR-1), this protein is Sulfate/thiosulfate import ATP-binding protein CysA 2.